Reading from the N-terminus, the 248-residue chain is Probable phosphatase VPA0505 (248 aa).

Residues His8, His10, His16, His41, Glu74, His102, His132, Asp194, and His196 each coordinate Zn(2+).

It belongs to the PHP family. The cofactor is Zn(2+).

The chain is Probable phosphatase VPA0505 from Vibrio parahaemolyticus serotype O3:K6 (strain RIMD 2210633).